The primary structure comprises 72 residues: Translation initiation factor IF-1 (72 aa).

In terms of domain architecture, S1-like spans 2 to 72 (AKDDVIEVEG…TRGRITYRYK (71 aa)). Y60 carries the phosphotyrosine modification.

Belongs to the IF-1 family. As to quaternary structure, component of the 30S ribosomal translation pre-initiation complex which assembles on the 30S ribosome in the order IF-2 and IF-3, IF-1 and N-formylmethionyl-tRNA(fMet); mRNA recruitment can occur at any time during PIC assembly.

The protein resides in the cytoplasm. Its function is as follows. One of the essential components for the initiation of protein synthesis. Stabilizes the binding of IF-2 and IF-3 on the 30S subunit to which N-formylmethionyl-tRNA(fMet) subsequently binds. Helps modulate mRNA selection, yielding the 30S pre-initiation complex (PIC). Upon addition of the 50S ribosomal subunit IF-1, IF-2 and IF-3 are released leaving the mature 70S translation initiation complex. The polypeptide is Translation initiation factor IF-1 (Bacillus subtilis (strain 168)).